The chain runs to 286 residues: MKVIKTLSIINFFIFVTFNIKNESKYSNTFINNAYNMSIRRSMTESKTPTPTGAGAGASGSAGSGDGASGSASGSASGSASGSAGASGSASGSAGASGSASGSAGAEGSPSTPATTTTTTTTNDAEASTSTSSENPNHNNAKTNPKGNGGVQKPNQANKETQNNSNVQQDSQTKSNVPPTQDADTKSPTAQPEQAENSAPTAEQTESPELQSAPENKGTGQHGHMHGSRNNHPQNTSDSQKECTDGNKENCGAATSLLNNSSNIASINKFVVLISATLVLSFAIFI.

A signal peptide spans 1 to 20 (MKVIKTLSIINFFIFVTFNI). N-linked (GlcNAc...) asparagine glycans are attached at residues N22 and N36. The segment at 43–248 (MTESKTPTPT…SQKECTDGNK (206 aa)) is disordered. Positions 44 to 212 (TESKTPTPTG…EQTESPELQS (169 aa)) are polymorphic region. Over residues 54 to 68 (AGAGASGSAGSGDGA) the composition is skewed to gly residues. Repeat unit 1 spans residues 59–68 (SGSAGSGDGA). The 5 X 10 AA tandem repeats of S-G-S-A-[GS]-[GS]-[AD]-G-A stretch occupies residues 59–106 (SGSAGSGDGASGSASGSASGSASGSAGASGSASGSAGASGSASGSAGA). The 2; partial repeat unit spans residues 69 to 76 (SGSASGSA). Over residues 69 to 137 (SGSASGSASG…STSTSSENPN (69 aa)) the composition is skewed to low complexity. 3 consecutive repeat copies span residues 77 to 86 (SGSASGSAGA), 88 to 96 (GSASGSAGA), and 97 to 106 (SGSASGSAGA). Composition is skewed to polar residues over residues 153 to 179 (KPNQ…NVPP) and 186 to 214 (KSPT…QSAP). The N-linked (GlcNAc...) asparagine glycan is linked to N163. Residue N235 is glycosylated (N-linked (GlcNAc...) asparagine). A compositionally biased stretch (basic and acidic residues) spans 239–248 (SQKECTDGNK). A disulfide bridge connects residues C243 and C251. 2 N-linked (GlcNAc...) asparagine glycosylation sites follow: N259 and N260. N260 carries the GPI-anchor amidated asparagine lipid modification. A propeptide spans 261–286 (SSNIASINKFVVLISATLVLSFAIFI) (removed in mature form).

Its subcellular location is the cell membrane. Its function is as follows. May play a role in the merozoite attachment to the erythrocyte. This is Merozoite surface protein 2 from Plasmodium falciparum (isolate 311).